We begin with the raw amino-acid sequence, 92 residues long: Acylphosphatase (92 aa).

The region spanning 5–90 (TYRLVICGLV…GDFVGFQLRE (86 aa)) is the Acylphosphatase-like domain. Residues arginine 20 and asparagine 38 contribute to the active site.

This sequence belongs to the acylphosphatase family.

It carries out the reaction an acyl phosphate + H2O = a carboxylate + phosphate + H(+). This Albidiferax ferrireducens (strain ATCC BAA-621 / DSM 15236 / T118) (Rhodoferax ferrireducens) protein is Acylphosphatase (acyP).